The sequence spans 460 residues: Probable Xaa-Pro aminopeptidase VDBG_02538 (460 aa).

Positions 256, 267, 390, and 430 each coordinate Mn(2+).

The protein belongs to the peptidase M24B family. Mn(2+) serves as cofactor.

The enzyme catalyses Release of any N-terminal amino acid, including proline, that is linked to proline, even from a dipeptide or tripeptide.. Functionally, catalyzes the removal of a penultimate prolyl residue from the N-termini of peptides. The protein is Probable Xaa-Pro aminopeptidase VDBG_02538 of Verticillium alfalfae (strain VaMs.102 / ATCC MYA-4576 / FGSC 10136) (Verticillium wilt of alfalfa).